The sequence spans 1340 residues: Thioester-containing protein 1 allele S1 (1340 aa).

Residues 1 to 21 (MWQFIRSRILTVIIFIGAAHG) form the signal peptide. N-linked (GlcNAc...) asparagine glycosylation is found at Asn-68, Asn-199, Asn-242, Asn-312, and Asn-481. Residues 580 to 609 (ENEFDIFHSLGLFARTLDDILFDSANEKTG) are may contain the cleavage site. Residues Asn-637, Asn-728, Asn-813, and Asn-828 are each glycosylated (N-linked (GlcNAc...) asparagine). Positions 859–862 (CGEQ) form a cross-link, isoglutamyl cysteine thioester (Cys-Gln). 3 cysteine pairs are disulfide-bonded: Cys-1217-Cys-1283, Cys-1326-Cys-1338, and Cys-1329-Cys-1334.

Heterodimer of a TEP1-N chain and an TEP1-C chain non-covalently linked. Forms a complex composed of TEP1-N and TEP1-C heterodimer, LRIM1 and APL1C; the interaction stabilizes TEP1-N and TEP1-C heterodimer, prevents its binding to tissues while circulating in the hemolymph and protects the thioester bond from hydrolysis. Mature TEP1 and to a lesser extent full-length TEP1 interact with SPCLIP1; the interaction is induced by microbial infection. In terms of processing, in the hemolymph, the full-length protein is cleaved by an unknow protease into a 75kDa N-terminal (TEP1-N) chain and an 80kDa C-terminal (TEP1-C) chain which remain non-covalently linked. The TEP1-C chain contains the thioester bond which covalently binds to the pathogen surface. Cleavage is induced by bacterial infection or aseptic wound injury. During embryonic and pupal development, the cleaved form is the predominant form. Post-translationally, N-glycosylated. In terms of tissue distribution, specifically expressed in hemocytes (at protein level).

Its subcellular location is the secreted. Functionally, plays an essential role in the innate immune response to bacteria and protozoa infection. After proteolytic cleavage, the protein C-terminus binds covalently through a thioester bond to the pathogen surface resulting in pathogen clearance either by melanization or lysis. Initiate the recruitment and activation of a cascade of proteases, mostly of CLIP-domain serine proteases, which leads to the proteolytic cleavage of the prophenoloxidase (PPO) into active phenoloxidase (PO), the rate-limiting enzyme in melanin biosynthesis. In response to parasite P.berghei-mediated infection, binds to and mediates killing of ookinetes, as they egress from midgut epithelial cells into the basal labyrinth, by both lysis and melanization. During bacterial infection, binds to both Gram-positive and Gram-negative bacteria but only promotes phagocytosis of Gram-negative bacteria. Promotes the accumulation of SPCLIP1 onto the surface of P.berghei ookinetes and bacterium E.coli which leads to the melanization of the pathogen. Recruits CLIPA2 to bacteria surface. In response to bacterial infection, required for periostial hemocyte aggregation, but not for the aggregation of sessile hemocytes in non-periostial regions. During the late stage of fungus B.bassiana-mediated infection, required for the initiation of hyphae melanization by binding to the surface of hyphae and recruiting prophenoloxidase PPO to them. Plays a role in male fertility by binding to defective sperm cells and promoting their removal during spermatogenesis. In terms of biological role, binds covalently through a thioester bond to the pathogen surface resulting in pathogen clearance. This is Thioester-containing protein 1 allele S1 from Anopheles gambiae (African malaria mosquito).